The primary structure comprises 191 residues: Fe/S biogenesis protein NfuA (191 aa).

Residues C149 and C152 each coordinate [4Fe-4S] cluster.

This sequence belongs to the NfuA family. Homodimer. The cofactor is [4Fe-4S] cluster.

Functionally, involved in iron-sulfur cluster biogenesis. Binds a 4Fe-4S cluster, can transfer this cluster to apoproteins, and thereby intervenes in the maturation of Fe/S proteins. Could also act as a scaffold/chaperone for damaged Fe/S proteins. This is Fe/S biogenesis protein NfuA from Pseudoalteromonas translucida (strain TAC 125).